The chain runs to 625 residues: Chaperone protein DnaK (625 aa).

T197 carries the phosphothreonine; by autocatalysis modification. The interval 598–625 (MYKKDDNASGEQSGGKKKDDDVIDAEVE) is disordered.

Belongs to the heat shock protein 70 family.

In terms of biological role, acts as a chaperone. This is Chaperone protein DnaK from Campylobacter curvus (strain 525.92).